A 304-amino-acid polypeptide reads, in one-letter code: Polyisoprenyl-teichoic acid--peptidoglycan teichoic acid transferase TagU (304 aa).

The Cytoplasmic portion of the chain corresponds to 1–3 (MKK). The helical; Signal-anchor for type II membrane protein transmembrane segment at 4–24 (ALIAIGLILGTITVAIIGYGI) threads the bilayer. The Extracellular segment spans residues 25-304 (YLYSSIQNTA…GELKSHLELS (280 aa)).

Belongs to the LytR/CpsA/Psr (LCP) family.

It is found in the cell membrane. Its pathway is cell wall biogenesis. Functionally, may catalyze the final step in cell wall teichoic acid biosynthesis, the transfer of the anionic cell wall polymers (APs) from their lipid-linked precursor to the cell wall peptidoglycan (PG). The chain is Polyisoprenyl-teichoic acid--peptidoglycan teichoic acid transferase TagU from Halalkalibacterium halodurans (strain ATCC BAA-125 / DSM 18197 / FERM 7344 / JCM 9153 / C-125) (Bacillus halodurans).